The sequence spans 376 residues: Glucose-1-phosphate adenylyltransferase (376 aa).

Alpha-D-glucose 1-phosphate-binding positions include tyrosine 101, glycine 166, 181–182 (EK), and serine 192.

This sequence belongs to the bacterial/plant glucose-1-phosphate adenylyltransferase family. In terms of assembly, homotetramer.

The catalysed reaction is alpha-D-glucose 1-phosphate + ATP + H(+) = ADP-alpha-D-glucose + diphosphate. The protein operates within glycan biosynthesis; glycogen biosynthesis. In terms of biological role, involved in the biosynthesis of ADP-glucose, a building block required for the elongation reactions to produce glycogen. Catalyzes the reaction between ATP and alpha-D-glucose 1-phosphate (G1P) to produce pyrophosphate and ADP-Glc. The protein is Glucose-1-phosphate adenylyltransferase of Bacillus cytotoxicus (strain DSM 22905 / CIP 110041 / 391-98 / NVH 391-98).